The chain runs to 307 residues: Aspartate carbamoyltransferase catalytic subunit (307 aa).

2 residues coordinate carbamoyl phosphate: R58 and T59. K86 contributes to the L-aspartate binding site. Residues R108, H136, and Q139 each coordinate carbamoyl phosphate. Residues R169 and R223 each contribute to the L-aspartate site. The carbamoyl phosphate site is built by G264 and P265.

This sequence belongs to the aspartate/ornithine carbamoyltransferase superfamily. ATCase family. In terms of assembly, heterododecamer (2C3:3R2) of six catalytic PyrB chains organized as two trimers (C3), and six regulatory PyrI chains organized as three dimers (R2).

The enzyme catalyses carbamoyl phosphate + L-aspartate = N-carbamoyl-L-aspartate + phosphate + H(+). The protein operates within pyrimidine metabolism; UMP biosynthesis via de novo pathway; (S)-dihydroorotate from bicarbonate: step 2/3. Functionally, catalyzes the condensation of carbamoyl phosphate and aspartate to form carbamoyl aspartate and inorganic phosphate, the committed step in the de novo pyrimidine nucleotide biosynthesis pathway. In Syntrophus aciditrophicus (strain SB), this protein is Aspartate carbamoyltransferase catalytic subunit.